Consider the following 750-residue polypeptide: Neprilysin (750 aa).

Polar residues predominate over residues 1–14 (MGKSESQMDITDIN). The disordered stretch occupies residues 1–20 (MGKSESQMDITDINTPKPKK). Gly-2 is lipidated: N-myristoyl glycine. Residues 2–28 (GKSESQMDITDINTPKPKKKQRWTPLE) are Cytoplasmic-facing. A phosphoserine mark is found at Ser-4 and Ser-6. The Stop-transfer sequence motif lies at 16-23 (PKPKKKQR). Residues 29 to 51 (ISLSVLVLLLTIIAVTMIALYAT) traverse the membrane as a helical; Signal-anchor for type II membrane protein segment. The Extracellular segment spans residues 52 to 750 (YDDGICKSSD…MNPEKKCRVW (699 aa)). The region spanning 56-750 (ICKSSDCIKS…MNPEKKCRVW (695 aa)) is the Peptidase M13 domain. Disulfide bonds link Cys-57/Cys-62, Cys-80/Cys-735, Cys-88/Cys-695, Cys-143/Cys-411, Cys-234/Cys-242, and Cys-621/Cys-747. Residue Arg-103 participates in a peptide binding. Residue Asn-145 is glycosylated (N-linked (GlcNAc...) asparagine). Asn-285, Asn-311, Asn-325, and Asn-335 each carry an N-linked (GlcNAc...) asparagine glycan. His-584 provides a ligand contact to Zn(2+). The active site involves Glu-585. His-588 contributes to the Zn(2+) binding site. N-linked (GlcNAc...) asparagine glycosylation occurs at Asn-628. Glu-647 contributes to the Zn(2+) binding site. Asp-651 (proton donor) is an active-site residue.

The protein belongs to the peptidase M13 family. It depends on Zn(2+) as a cofactor. Myristoylation is a determinant of membrane targeting. Post-translationally, glycosylation at Asn-628 is necessary both for surface expression and neutral endopeptidase activity.

The protein resides in the cell membrane. The catalysed reaction is Preferential cleavage of polypeptides between hydrophobic residues, particularly with Phe or Tyr at P1'.. It carries out the reaction substance P + H2O = substance P(1-9) + L-Leu-L-Met-NH2. It catalyses the reaction substance P + H2O = substance P(1-7) + L-Phe-Gly-L-Leu-L-Met-NH2. The enzyme catalyses neurotensin + H2O = neurotensin(1-11) + L-isoleucyl-L-leucine. The catalysed reaction is neurotensin + H2O = neurotensin(1-10) + L-tyrosyl-L-isoleucyl-L-leucine. Thermolysin-like specificity, but is almost confined on acting on polypeptides of up to 30 amino acids. Biologically important in the destruction of opioid peptides such as Met- and Leu-enkephalins by cleavage of a Gly-Phe bond. Catalyzes cleavage of bradykinin, substance P and neurotensin peptides. Able to cleave angiotensin-1, angiotensin-2 and angiotensin 1-9. Involved in the degradation of atrial natriuretic factor (ANF) and brain natriuretic factor (BNP(1-32)). Displays UV-inducible elastase activity toward skin preelastic and elastic fibers. The polypeptide is Neprilysin (MME) (Pongo abelii (Sumatran orangutan)).